Here is a 169-residue protein sequence, read N- to C-terminus: UPF0303 protein BruAb1_1406 (169 aa).

It belongs to the UPF0303 family.

The sequence is that of UPF0303 protein BruAb1_1406 from Brucella abortus biovar 1 (strain 9-941).